The sequence spans 290 residues: Phosphatidylglycerol--prolipoprotein diacylglyceryl transferase (290 aa).

The next 7 membrane-spanning stretches (helical) occupy residues 21-41, 60-80, 96-116, 130-150, 198-218, 225-245, and 258-278; these read VSLHWYGLMYLVGFVFAMWLA, LLYAGFLGVFVGGRVGYVLFY, WDGGMSFHGGLMGVILVMFWF, FIAPLIPFGLGAGRLGNFING, SQLYELLLEGVVLFIILNLFI, GAVSGLFLIGYGAFRIIVEAF, and VISMGQILSVPMVVAGIIMMI. Residue Arg-143 participates in a 1,2-diacyl-sn-glycero-3-phospho-(1'-sn-glycerol) binding.

It belongs to the Lgt family.

The protein resides in the cell inner membrane. The catalysed reaction is L-cysteinyl-[prolipoprotein] + a 1,2-diacyl-sn-glycero-3-phospho-(1'-sn-glycerol) = an S-1,2-diacyl-sn-glyceryl-L-cysteinyl-[prolipoprotein] + sn-glycerol 1-phosphate + H(+). Its pathway is protein modification; lipoprotein biosynthesis (diacylglyceryl transfer). Its function is as follows. Catalyzes the transfer of the diacylglyceryl group from phosphatidylglycerol to the sulfhydryl group of the N-terminal cysteine of a prolipoprotein, the first step in the formation of mature lipoproteins. This is Phosphatidylglycerol--prolipoprotein diacylglyceryl transferase from Serratia proteamaculans (strain 568).